The chain runs to 357 residues: Heat-inducible transcription repressor HrcA (357 aa).

This sequence belongs to the HrcA family.

Negative regulator of class I heat shock genes (grpE-dnaK-dnaJ and groELS operons). Prevents heat-shock induction of these operons. The chain is Heat-inducible transcription repressor HrcA from Chlorobium luteolum (strain DSM 273 / BCRC 81028 / 2530) (Pelodictyon luteolum).